A 432-amino-acid polypeptide reads, in one-letter code: Trigger factor (432 aa).

Residues 161 to 246 (EDRVTIDFTG…LKKVEERELP (86 aa)) enclose the PPIase FKBP-type domain.

It belongs to the FKBP-type PPIase family. Tig subfamily. As to quaternary structure, homodimer and monomer. In vivo most of the ribosomes are in complex with monomeric TF. Uncomplexed TF, however, is in a monomer-dimer equilibrium with approximately two thirds of TF existing in a dimeric state.

The protein localises to the cytoplasm. It catalyses the reaction [protein]-peptidylproline (omega=180) = [protein]-peptidylproline (omega=0). Involved in protein export. Acts as a chaperone by maintaining the newly synthesized protein in an open conformation. Functions as a peptidyl-prolyl cis-trans isomerase. In Escherichia coli O6:K15:H31 (strain 536 / UPEC), this protein is Trigger factor.